The chain runs to 56 residues: Large ribosomal subunit protein bL33 (56 aa).

Residues 1–12 are compositionally biased toward basic and acidic residues; the sequence is MATKGGRDKIKL. Positions 1–24 are disordered; that stretch reads MATKGGRDKIKLESTAGTGHFYTT. The span at 15 to 24 shows a compositional bias: polar residues; that stretch reads TAGTGHFYTT.

The protein belongs to the bacterial ribosomal protein bL33 family.

The chain is Large ribosomal subunit protein bL33 from Paracidovorax citrulli (strain AAC00-1) (Acidovorax citrulli).